We begin with the raw amino-acid sequence, 220 residues long: Probable cutinase 5 (220 aa).

The first 18 residues, Met1–Ala18, serve as a signal peptide directing secretion. 2 disulfide bridges follow: Cys42–Cys121 and Cys68–Cys82. Ser132 functions as the Nucleophile in the catalytic mechanism. The cysteines at positions 183 and 190 are disulfide-linked. Asp187 is an active-site residue. Residue His200 is the Proton donor/acceptor of the active site.

This sequence belongs to the cutinase family.

It is found in the secreted. The catalysed reaction is cutin + H2O = cutin monomers.. Functionally, catalyzes the hydrolysis of complex carboxylic polyesters found in the cell wall of plants. Degrades cutin, a macromolecule that forms the structure of the plant cuticle. The polypeptide is Probable cutinase 5 (Aspergillus terreus (strain NIH 2624 / FGSC A1156)).